Here is a 150-residue protein sequence, read N- to C-terminus: 3-hydroxyacyl-[acyl-carrier-protein] dehydratase FabZ (150 aa).

His-53 is an active-site residue.

This sequence belongs to the thioester dehydratase family. FabZ subfamily.

It localises to the cytoplasm. The enzyme catalyses a (3R)-hydroxyacyl-[ACP] = a (2E)-enoyl-[ACP] + H2O. Involved in unsaturated fatty acids biosynthesis. Catalyzes the dehydration of short chain beta-hydroxyacyl-ACPs and long chain saturated and unsaturated beta-hydroxyacyl-ACPs. The polypeptide is 3-hydroxyacyl-[acyl-carrier-protein] dehydratase FabZ (Proteus mirabilis (strain HI4320)).